Consider the following 462-residue polypeptide: Bifunctional protein GlmU (462 aa).

The pyrophosphorylase stretch occupies residues 1 to 235; it reads MSYINFSAII…TFEIMGVNSK (235 aa). UDP-N-acetyl-alpha-D-glucosamine contacts are provided by residues 11–14, lysine 25, glutamine 80, 85–86, 107–109, glycine 144, glutamate 159, and asparagine 233; these read LAAG, GT, and YGD. Position 109 (aspartate 109) interacts with Mg(2+). Residue asparagine 233 coordinates Mg(2+). Residues 236 to 256 are linker; that stretch reads SDFVDLDKQYQQRKVQCLLSS. Residues 257–462 are N-acetyltransferase; that stretch reads GLMIIDPNRF…LNWKRLKNKK (206 aa). UDP-N-acetyl-alpha-D-glucosamine is bound by residues arginine 339 and lysine 357. The active-site Proton acceptor is the histidine 369. The UDP-N-acetyl-alpha-D-glucosamine site is built by tyrosine 372 and asparagine 383. Acetyl-CoA contacts are provided by residues alanine 386, 392–393, alanine 429, and arginine 446; that span reads NY.

It in the N-terminal section; belongs to the N-acetylglucosamine-1-phosphate uridyltransferase family. This sequence in the C-terminal section; belongs to the transferase hexapeptide repeat family. As to quaternary structure, homotrimer. The cofactor is Mg(2+).

It is found in the cytoplasm. The catalysed reaction is alpha-D-glucosamine 1-phosphate + acetyl-CoA = N-acetyl-alpha-D-glucosamine 1-phosphate + CoA + H(+). The enzyme catalyses N-acetyl-alpha-D-glucosamine 1-phosphate + UTP + H(+) = UDP-N-acetyl-alpha-D-glucosamine + diphosphate. It functions in the pathway nucleotide-sugar biosynthesis; UDP-N-acetyl-alpha-D-glucosamine biosynthesis; N-acetyl-alpha-D-glucosamine 1-phosphate from alpha-D-glucosamine 6-phosphate (route II): step 2/2. The protein operates within nucleotide-sugar biosynthesis; UDP-N-acetyl-alpha-D-glucosamine biosynthesis; UDP-N-acetyl-alpha-D-glucosamine from N-acetyl-alpha-D-glucosamine 1-phosphate: step 1/1. Its pathway is bacterial outer membrane biogenesis; LPS lipid A biosynthesis. In terms of biological role, catalyzes the last two sequential reactions in the de novo biosynthetic pathway for UDP-N-acetylglucosamine (UDP-GlcNAc). The C-terminal domain catalyzes the transfer of acetyl group from acetyl coenzyme A to glucosamine-1-phosphate (GlcN-1-P) to produce N-acetylglucosamine-1-phosphate (GlcNAc-1-P), which is converted into UDP-GlcNAc by the transfer of uridine 5-monophosphate (from uridine 5-triphosphate), a reaction catalyzed by the N-terminal domain. This is Bifunctional protein GlmU from Blochmanniella pennsylvanica (strain BPEN).